Consider the following 1583-residue polypeptide: Dynamin-binding protein (1583 aa).

N-acetylmethionine is present on methionine 1. SH3 domains follow at residues glutamate 2–isoleucine 61, glutamate 66–leucine 126, tyrosine 145–proline 204, and glutamine 243–lysine 302. 3 disordered regions span residues histidine 217–proline 244, glutamate 306–glutamate 329, and glutamate 366–tyrosine 464. The span at glycine 224 to glutamine 243 shows a compositional bias: acidic residues. A compositionally biased stretch (basic and acidic residues) spans glutamate 366–threonine 379. The span at glutamate 406–tyrosine 442 shows a compositional bias: polar residues. At serine 495 the chain carries Phosphoserine. Disordered regions lie at residues arginine 594 to glutamine 656 and leucine 671 to aspartate 693. Residues proline 637–proline 653 show a composition bias toward pro residues. Residues glutamate 675–proline 685 show a composition bias toward basic and acidic residues. A coiled-coil region spans residues leucine 742–methionine 762. One can recognise a DH domain in the interval lysine 791–tyrosine 974. The BAR domain maps to leucine 1015–leucine 1224. The 64-residue stretch at proline 1292–threonine 1355 folds into the SH3 5 domain. The segment at arginine 1357–threonine 1496 is disordered. The span at aspartate 1361 to serine 1387 shows a compositional bias: low complexity. Residues glycine 1388–threonine 1414 show a composition bias toward polar residues. Over residues serine 1433–proline 1456 the composition is skewed to low complexity. The 64-residue stretch at glutamate 1519 to tyrosine 1582 folds into the SH3 6 domain.

In terms of assembly, binds DNM1 via its N-terminal SH3 domains. The C-terminal SH3 domain binds a complex containing actin, tubulin, Hsp70 and actin-regulatory proteins, such as ENAH, EVL, WIRE, CR16, WAVE1 and NAP1L1. Interacts with FASLG. Interacts (via SH3 domain 6) with WASL. Interacts (via SH3 domain 6) interacts with ENAH. Interacts (via C-terminal domain) with TJP1; required for the apical cell-cell junction localization of DNMBP.

It localises to the cytoplasm. It is found in the golgi apparatus. The protein localises to the golgi stack. Its subcellular location is the cytoskeleton. The protein resides in the synapse. It localises to the cell junction. Functionally, plays a critical role as a guanine nucleotide exchange factor (GEF) for CDC42 in several intracellular processes associated with the actin and microtubule cytoskeleton. Regulates the structure of apical junctions in epithelial cells. Participates in the normal lumenogenesis of epithelial cell cysts by regulating spindle orientation. Plays a key role in ciliogenesis and cyst formation. May play a role in membrane trafficking between the cell surface and the Golgi. The chain is Dynamin-binding protein from Canis lupus familiaris (Dog).